Consider the following 158-residue polypeptide: 6,7-dimethyl-8-ribityllumazine synthase (158 aa).

5-amino-6-(D-ribitylamino)uracil-binding positions include Phe-23, 61-63 (SFE), and 85-87 (AVI). 90 to 91 (ET) is a (2S)-2-hydroxy-3-oxobutyl phosphate binding site. His-93 (proton donor) is an active-site residue. Position 118 (Phe-118) interacts with 5-amino-6-(D-ribitylamino)uracil. Arg-132 provides a ligand contact to (2S)-2-hydroxy-3-oxobutyl phosphate.

This sequence belongs to the DMRL synthase family.

It catalyses the reaction (2S)-2-hydroxy-3-oxobutyl phosphate + 5-amino-6-(D-ribitylamino)uracil = 6,7-dimethyl-8-(1-D-ribityl)lumazine + phosphate + 2 H2O + H(+). Its pathway is cofactor biosynthesis; riboflavin biosynthesis; riboflavin from 2-hydroxy-3-oxobutyl phosphate and 5-amino-6-(D-ribitylamino)uracil: step 1/2. Its function is as follows. Catalyzes the formation of 6,7-dimethyl-8-ribityllumazine by condensation of 5-amino-6-(D-ribitylamino)uracil with 3,4-dihydroxy-2-butanone 4-phosphate. This is the penultimate step in the biosynthesis of riboflavin. This chain is 6,7-dimethyl-8-ribityllumazine synthase, found in Prochlorococcus marinus (strain MIT 9301).